The sequence spans 95 residues: Small ribosomal subunit protein bS6 (95 aa).

This sequence belongs to the bacterial ribosomal protein bS6 family.

Its function is as follows. Binds together with bS18 to 16S ribosomal RNA. This is Small ribosomal subunit protein bS6 from Thermoanaerobacter pseudethanolicus (strain ATCC 33223 / 39E) (Clostridium thermohydrosulfuricum).